We begin with the raw amino-acid sequence, 582 residues long: uncharacterized protein (582 aa).

6 helical membrane-spanning segments follow: residues 17-37 (VAML…LPTV), 57-77 (LGAV…GAVY), 131-151 (MTAT…IMAI), 156-176 (ALTW…YWII), 239-259 (ALML…LIWF), and 271-291 (VGSL…VLMA). One can recognise an ABC transmembrane type-1 domain in the interval 17-300 (VAMLMMLQLV…ATMTLAVLPR (284 aa)). One can recognise an ABC transporter domain in the interval 335 to 571 (VRLAGATFTY…CPTYAEFAAS (237 aa)). 369–376 (GSTGSGKS) lines the ATP pocket.

Belongs to the ABC transporter superfamily. MsbA family.

The protein resides in the cell membrane. This is an uncharacterized protein from Mycobacterium bovis (strain ATCC BAA-935 / AF2122/97).